Here is a 221-residue protein sequence, read N- to C-terminus: Uracil-DNA glycosylase (221 aa).

Asp-65 acts as the Proton acceptor in catalysis.

It belongs to the uracil-DNA glycosylase (UDG) superfamily. UNG family.

The protein resides in the cytoplasm. The catalysed reaction is Hydrolyzes single-stranded DNA or mismatched double-stranded DNA and polynucleotides, releasing free uracil.. In terms of biological role, excises uracil residues from the DNA which can arise as a result of misincorporation of dUMP residues by DNA polymerase or due to deamination of cytosine. The protein is Uracil-DNA glycosylase of Flavobacterium johnsoniae (strain ATCC 17061 / DSM 2064 / JCM 8514 / BCRC 14874 / CCUG 350202 / NBRC 14942 / NCIMB 11054 / UW101) (Cytophaga johnsonae).